Reading from the N-terminus, the 308-residue chain is MFALILFVSLACANEVAFKQWAATHNKVFANRAEYLYRFAVFLDNKKFVEANANTELNVFADMTHEEFIQTHLGMTYEVPETTSNVKAAVKAAPESVDWRSIMNPAKDQGQCGSCWTFCTTAVLEGRVNKDLGKLYSFSEQQLVDCDASDNGCEGGHPSNSLKFIQENNGLGLESDYPYKAVAGTCKKVKNVATVTGSRRVTDGSETGLQTIIAENGPVAVGMDASRPSFQLYKKGTIYSDTKCRSRMMNHCVTAVGYGSNSNGKYWIIRNSWGTSWGDAGYFLLARDSNNMCGIGRDSNYPTGVKLI.

The first 13 residues, 1–13 (MFALILFVSLACA), serve as a signal peptide directing secretion. Positions 14–92 (NEVAFKQWAA…TSNVKAAVKA (79 aa)) are cleaved as a propeptide — activation peptide. Disulfide bonds link cysteine 112/cysteine 153 and cysteine 146/cysteine 186. Residue cysteine 115 is part of the active site. Residues histidine 251 and asparagine 271 contribute to the active site.

Belongs to the peptidase C1 family.

It localises to the cytoplasm. It is found in the cytoplasmic vesicle. The protein resides in the phagosome. It catalyses the reaction Hydrolysis of proteins, including basement membrane collagen and azocasein. Preferential cleavage: Arg-Arg-|-Xaa in small molecule substrates including Z-Arg-Arg-|-NHMec.. Cysteine protease which may be involved in pathogenicity. This chain is Cysteine proteinase 3, found in Entamoeba histolytica (strain ATCC 30459 / HM-1:IMSS / ABRM).